The primary structure comprises 510 residues: 2-isopropylmalate synthase (510 aa).

In terms of domain architecture, Pyruvate carboxyltransferase spans 5 to 267 (LVIFDTTLRD…DTRIDTTQIV (263 aa)). The Mn(2+) site is built by D14, H202, H204, and N238. Residues 392 to 510 (RLLSLHAVSE…SSLERTHPQI (119 aa)) form a regulatory domain region.

The protein belongs to the alpha-IPM synthase/homocitrate synthase family. LeuA type 1 subfamily. Homodimer. Requires Mn(2+) as cofactor.

The protein localises to the cytoplasm. It catalyses the reaction 3-methyl-2-oxobutanoate + acetyl-CoA + H2O = (2S)-2-isopropylmalate + CoA + H(+). It functions in the pathway amino-acid biosynthesis; L-leucine biosynthesis; L-leucine from 3-methyl-2-oxobutanoate: step 1/4. Its function is as follows. Catalyzes the condensation of the acetyl group of acetyl-CoA with 3-methyl-2-oxobutanoate (2-ketoisovalerate) to form 3-carboxy-3-hydroxy-4-methylpentanoate (2-isopropylmalate). The chain is 2-isopropylmalate synthase from Nitrosomonas europaea (strain ATCC 19718 / CIP 103999 / KCTC 2705 / NBRC 14298).